We begin with the raw amino-acid sequence, 392 residues long: Norsolorinic acid reductase B (392 aa).

Asp75 contacts NADP(+). The active-site Proton donor is Tyr80. NADP(+) contacts are provided by residues 184 to 185, Gln210, 239 to 249, and 311 to 319; these read SD, GTLGQGSFQTE, and RKLEHIQGN. Residues 242 to 263 form a disordered region; the sequence is GQGSFQTEEGRKQREKDNPGRK. Positions 249-261 are enriched in basic and acidic residues; that stretch reads EEGRKQREKDNPG.

It belongs to the aldo/keto reductase family. Aldo/keto reductase 2 subfamily.

Its pathway is mycotoxin biosynthesis. Its function is as follows. Norsolorinic acid reductase; part of the fragmented gene cluster that mediates the biosynthesis of dothistromin (DOTH), a polyketide toxin very similar in structure to the aflatoxin precursor, versicolorin B. The first step of the pathway is the conversion of acetate to norsolorinic acid (NOR) and requires the fatty acid synthase subunits hexA and hexB, as well as the polyketide synthase pksA. PksA combines a hexanoyl starter unit and 7 malonyl-CoA extender units to synthesize the precursor NOR. The hexanoyl starter unit is provided to the acyl-carrier protein (ACP) domain by the fungal fatty acid synthase hexA/hexB. The second step is the conversion of NOR to averantin (AVN) and requires the norsolorinic acid ketoreductase nor1, which catalyzes the dehydration of norsolorinic acid to form (1'S)-averantin. The cytochrome P450 monooxygenase avnA then catalyzes the hydroxylation of AVN to 5'hydroxyaverantin (HAVN). The next step is performed by adhA that transforms HAVN to averufin (AVF). Averufin might then be converted to hydroxyversicolorone by cypX and avfA. Hydroxyversicolorone is further converted versiconal hemiacetal acetate (VHA) by moxY. VHA is then the substrate for the versiconal hemiacetal acetate esterase est1 to yield versiconal (VAL). Versicolorin B synthase vbsA then converts VAL to versicolorin B (VERB) by closing the bisfuran ring. Then, the activity of the versicolorin B desaturase verB leads to versicolorin A (VERA). DotB, a predicted chloroperoxidase, may perform epoxidation of the A-ring of VERA. Alternatively, a cytochrome P450, such as cypX or avnA could catalyze this step. It is also possible that another, uncharacterized, cytochrome P450 enzyme is responsible for this step. Opening of the epoxide could potentially be achieved by the epoxide hydrolase epoA. However, epoA seems not to be required for DOTH biosynthesis, but other epoxide hydrolases may have the ability to complement this hydrolysis. Alternatively, opening of the epoxide ring could be achieved non-enzymatically. The next step is the deoxygenation of ring A to yield the 5,8-dihydroxyanthraquinone which is most likely catalyzed by the NADPH dehydrogenase encoded by ver1. The last stages of DOTH biosynthesis are proposed to involve hydroxylation of the bisfuran. OrdB and norB might have oxidative roles here. An alternative possibility is that cytochrome P450 monoogenases such as avnA and cypX might perform these steps in addition to previously proposed steps. The polypeptide is Norsolorinic acid reductase B (Dothistroma septosporum (strain NZE10 / CBS 128990) (Red band needle blight fungus)).